The following is a 428-amino-acid chain: Mitochondrial import inner membrane translocase subunit TIM50-C (428 aa).

The chain crosses the membrane as a helical span at residues Leu59 to Ala79. Residues Arg80–Arg428 lie on the Mitochondrial intermembrane side of the membrane. The segment at Phe112–Asn138 is disordered. A compositionally biased stretch (basic and acidic residues) spans Glu124–Asn138. The FCP1 homology domain maps to Tyr224–Ile367.

This sequence belongs to the TIM50 family. Component of the TIM23 complex at least composed of Tim23, Tim17 (Tim17a1, Tim17a2 or Tim17b1) and a Tim50.

The protein resides in the mitochondrion inner membrane. Functionally, essential component of the TIM23 complex, a complex that mediates the translocation of transit peptide-containing proteins across the mitochondrial inner membrane. The sequence is that of Mitochondrial import inner membrane translocase subunit TIM50-C (ttm50) from Drosophila melanogaster (Fruit fly).